The following is a 223-amino-acid chain: MRVLLVALALLALAASATSTHTSGGCGCQPPPPVHLPPPVHLPPPVHLPPPVHLPPPVHLPPPVHLPPPVHVPPPVHLPPPPCHYPTQPPRPQPHPQPHPCPCQQPHPSPCQLQGTCGVGSTPILGQCVEFLRHQCSPTATPYCSPQCQSLRQQCCQQLRQVEPQHRYQAIFGLVLQSILQQQPQSGQVAGLLAAQIAQQLTAMCGLQQPTPCPYAAAGGVPH.

The N-terminal stretch at 1–19 (MRVLLVALALLALAASATS) is a signal peptide. 10 repeat units span residues 31–36 (PPPVHL), 37–42 (PPPVHL), 43–48 (PPPVHL), 49–54 (PPPVHL), 55–60 (PPPVHL), 61–66 (PPPVHL), 67–72 (PPPVHV), 73–78 (PPPVHL), 97–104 (QPHPCPCQ), and 105–112 (QPHPSPCQ). Residues 31–78 (PPPVHLPPPVHLPPPVHLPPPVHLPPPVHLPPPVHLPPPVHVPPPVHL) form an 8 X 6 AA tandem repeats of P-P-P-V-H-L region. The 2 X 8 AA tandem repeats of Q-P-H-P-C-P-C-Q stretch occupies residues 97 to 112 (QPHPCPCQQPHPSPCQ).

The protein belongs to the gliadin/glutenin family.

The protein resides in the vacuole. It is found in the aleurone grain membrane. Its function is as follows. Seed storage protein. It accounts for about 15% of the total endosperm protein content. In Zea mays (Maize), this protein is Glutelin-2.